The chain runs to 1180 residues: Phosphatidylinositol 4-kinase (1180 aa).

One can recognise a PIK helical domain in the interval 1–206; it reads MNKISDTIII…SVYLHSPSTS (206 aa). Disordered regions lie at residues 15 to 84, 257 to 327, 355 to 391, 768 to 799, and 832 to 894; these read NEDE…KHKE, ENDH…ENDN, TSPI…NNIN, TISN…IPHS, and AISP…SPFG. Over residues 38-74 the composition is skewed to low complexity; that stretch reads NNNNNNILTNVNNNKNNTITSSGGSDSSSSSSNNNNN. Positions 75 to 84 are enriched in basic residues; it reads KIKKSKKHKE. The span at 257-270 shows a compositional bias: basic and acidic residues; the sequence is ENDHHIENDPKKDI. 4 stretches are compositionally biased toward low complexity: residues 271–325, 364–391, 768–793, and 835–879; these read NSNN…SGEN, NNNN…NNIN, TISN…PTLP, and PPSQ…SPTN. The PI3K/PI4K catalytic domain occupies 895-1164; the sequence is ESWQEKIERY…LISYSIDHFK (270 aa). The interval 901–907 is G-loop; it reads IERYKKI. Positions 1030–1038 are catalytic loop; it reads QIKDRHNGN. Positions 1049–1073 are activation loop; the sequence is HIDFGFILSNSPGNISFESAPFKLT.

The protein belongs to the PI3/PI4-kinase family. Type III PI4K subfamily.

It catalyses the reaction a 1,2-diacyl-sn-glycero-3-phospho-(1D-myo-inositol) + ATP = a 1,2-diacyl-sn-glycero-3-phospho-(1D-myo-inositol 4-phosphate) + ADP + H(+). In terms of biological role, acts on phosphatidylinositol (PtdIns) in the first committed step in the production of the second messenger inositol-1,4,5,-trisphosphate. The polypeptide is Phosphatidylinositol 4-kinase (pikD) (Dictyostelium discoideum (Social amoeba)).